Consider the following 234-residue polypeptide: Ubiquinone biosynthesis O-methyltransferase (234 aa).

S-adenosyl-L-methionine contacts are provided by Arg-36, Gly-56, Asp-77, and Met-125.

It belongs to the methyltransferase superfamily. UbiG/COQ3 family.

It carries out the reaction a 3-demethylubiquinol + S-adenosyl-L-methionine = a ubiquinol + S-adenosyl-L-homocysteine + H(+). The catalysed reaction is a 3-(all-trans-polyprenyl)benzene-1,2-diol + S-adenosyl-L-methionine = a 2-methoxy-6-(all-trans-polyprenyl)phenol + S-adenosyl-L-homocysteine + H(+). Its pathway is cofactor biosynthesis; ubiquinone biosynthesis. Its function is as follows. O-methyltransferase that catalyzes the 2 O-methylation steps in the ubiquinone biosynthetic pathway. This chain is Ubiquinone biosynthesis O-methyltransferase, found in Actinobacillus pleuropneumoniae serotype 5b (strain L20).